The following is a 220-amino-acid chain: 7-carboxy-7-deazaguanine synthase (220 aa).

Substrate is bound by residues isoleucine 16–glycine 18 and arginine 31. A Radical SAM core domain is found at phenylalanine 22 to proline 215. 3 residues coordinate [4Fe-4S] cluster: cysteine 35, cysteine 39, and cysteine 42. A Mg(2+)-binding site is contributed by threonine 44. A substrate-binding site is contributed by threonine 74. Glycine 76 contacts S-adenosyl-L-methionine.

It belongs to the radical SAM superfamily. 7-carboxy-7-deazaguanine synthase family. As to quaternary structure, homodimer. [4Fe-4S] cluster serves as cofactor. S-adenosyl-L-methionine is required as a cofactor. The cofactor is Mg(2+).

The enzyme catalyses 6-carboxy-5,6,7,8-tetrahydropterin + H(+) = 7-carboxy-7-deazaguanine + NH4(+). The protein operates within purine metabolism; 7-cyano-7-deazaguanine biosynthesis. Functionally, catalyzes the complex heterocyclic radical-mediated conversion of 6-carboxy-5,6,7,8-tetrahydropterin (CPH4) to 7-carboxy-7-deazaguanine (CDG), a step common to the biosynthetic pathways of all 7-deazapurine-containing compounds. The polypeptide is 7-carboxy-7-deazaguanine synthase (Chlorobaculum tepidum (strain ATCC 49652 / DSM 12025 / NBRC 103806 / TLS) (Chlorobium tepidum)).